The chain runs to 46 residues: uncharacterized protein (46 aa).

It is found in the mitochondrion. This is an uncharacterized protein from Saccharomyces cerevisiae (strain ATCC 204508 / S288c) (Baker's yeast).